The following is a 311-amino-acid chain: Dihydroorotate dehydrogenase B (NAD(+)), catalytic subunit (311 aa).

Residues Lys52, 76–80 (NAMGL), and Asn133 contribute to the substrate site. An FMN-binding site is contributed by 52 to 53 (KS). Position 133 (Asn133) interacts with FMN. The active-site Nucleophile is Cys136. Lys171 and Ile197 together coordinate FMN. 198-199 (NT) provides a ligand contact to substrate. FMN contacts are provided by residues Gly223, 249–250 (GG), and 271–272 (GS).

This sequence belongs to the dihydroorotate dehydrogenase family. Type 1 subfamily. In terms of assembly, heterotetramer of 2 PyrK and 2 PyrD type B subunits. The cofactor is FMN.

It localises to the cytoplasm. It carries out the reaction (S)-dihydroorotate + NAD(+) = orotate + NADH + H(+). The protein operates within pyrimidine metabolism; UMP biosynthesis via de novo pathway; orotate from (S)-dihydroorotate (NAD(+) route): step 1/1. In terms of biological role, catalyzes the conversion of dihydroorotate to orotate with NAD(+) as electron acceptor. This chain is Dihydroorotate dehydrogenase B (NAD(+)), catalytic subunit (pyrD), found in Methanosarcina acetivorans (strain ATCC 35395 / DSM 2834 / JCM 12185 / C2A).